A 99-amino-acid polypeptide reads, in one-letter code: Bacterial microcompartment protein homohexamer (99 aa).

The BMC domain occupies 4–88 (ALGMIEVRGF…PHVNVDAALP (85 aa)).

It belongs to the bacterial microcompartments protein family. In terms of assembly, homohexamer with a small central pore. When purified protein is examined by atomic force microscopy it dynamically makes uniform patches about 35 Angstroms thick with hexamers in the same orientation. In the BMC the concave side faces outward, with the N- and C-terminii exposed to the cytoplasm.

It localises to the bacterial microcompartment. The only hexameric shell protein in this bacterium, it forms the majority of the bacterial microcompartment (BMC) shell. Expression of 5 proteins in E.coli (BMC-H (Hoch_5815), BMC-P (Hoch_5814), and 3 BMC-T (Hoch_5812, Hoch_5816, Hoch_3341)) forms a 40 nm artificial BMC with a molecular mass of 6.5 MDa. There are 60 BMC-H hexamers per BMC. The shell facets are 20-30 Angstroms thick (a single hexamer layer), with 1 of BMC-T trimers protruding to the exterior. This Haliangium ochraceum (strain DSM 14365 / JCM 11303 / SMP-2) protein is Bacterial microcompartment protein homohexamer.